Reading from the N-terminus, the 144-residue chain is Deoxyuridine 5'-triphosphate nucleotidohydrolase (144 aa).

Residues 63-65, asparagine 76, and 80-82 each bind substrate; these read RSG and TID.

This sequence belongs to the dUTPase family. The cofactor is Mg(2+).

It catalyses the reaction dUTP + H2O = dUMP + diphosphate + H(+). It functions in the pathway pyrimidine metabolism; dUMP biosynthesis; dUMP from dCTP (dUTP route): step 2/2. Functionally, this enzyme is involved in nucleotide metabolism: it produces dUMP, the immediate precursor of thymidine nucleotides and it decreases the intracellular concentration of dUTP so that uracil cannot be incorporated into DNA. The protein is Deoxyuridine 5'-triphosphate nucleotidohydrolase of Porphyromonas gingivalis (strain ATCC BAA-308 / W83).